The primary structure comprises 337 residues: MLIKIPSRSDCSESEVTSETLYLSRRRLLGASFAGLALASGLPRLGFADEQRYAGVESVPAPGWFAEKLPQTRWQAVNVQGEAITPFKDATHYNNFYEFGPNKGDPAENASALKAEPWSVVIDGEVGKPGTYALEDFVKPYQLEERIYRLRCVEAWSMVIPWLGFPLADLLKRVEPNGQAKFVRFETLQRPEQMVGQRSGFSVIDWPYMEGLRMDEAMHPLAILAVGMYGRLLPNQNGAPLRLVVPWKYGFKSIKSIVRISLVREQPKTTWESIAANEYGFYANVNPQVDHPRWSQARERRLPSGLFSPNVRDTQMFNGYGSEVASLYSGMDLRKYY.

A signal peptide (tat-type signal) is located at residues 1–48 (MLIKIPSRSDCSESEVTSETLYLSRRRLLGASFAGLALASGLPRLGFA). Residues asparagine 94, 97–98 (YE), cysteine 152, threonine 187, asparagine 237, arginine 242, and 253–255 (SIK) contribute to the Mo-molybdopterin site.

This sequence belongs to the MsrP family. As to quaternary structure, heterodimer of a catalytic subunit (MsrP) and a heme-binding subunit (MsrQ). Requires Mo-molybdopterin as cofactor. Post-translationally, predicted to be exported by the Tat system. The position of the signal peptide cleavage has not been experimentally proven.

The protein localises to the periplasm. The catalysed reaction is L-methionyl-[protein] + a quinone + H2O = L-methionyl-(S)-S-oxide-[protein] + a quinol. It carries out the reaction L-methionyl-[protein] + a quinone + H2O = L-methionyl-(R)-S-oxide-[protein] + a quinol. Functionally, part of the MsrPQ system that repairs oxidized periplasmic proteins containing methionine sulfoxide residues (Met-O), using respiratory chain electrons. Thus protects these proteins from oxidative-stress damage caused by reactive species of oxygen and chlorine generated by the host defense mechanisms. MsrPQ is essential for the maintenance of envelope integrity under bleach stress, rescuing a wide series of structurally unrelated periplasmic proteins from methionine oxidation. The catalytic subunit MsrP is non-stereospecific, being able to reduce both (R-) and (S-) diastereoisomers of methionine sulfoxide. The chain is Protein-methionine-sulfoxide reductase catalytic subunit MsrP from Pseudomonas aeruginosa (strain ATCC 15692 / DSM 22644 / CIP 104116 / JCM 14847 / LMG 12228 / 1C / PRS 101 / PAO1).